The chain runs to 209 residues: Large ribosomal subunit protein uL3 (209 aa).

The interval 133-152 is disordered; it reads THGNSLSHRVPGSIGQNQTP. Position 150 is an N5-methylglutamine (Gln-150).

This sequence belongs to the universal ribosomal protein uL3 family. Part of the 50S ribosomal subunit. Forms a cluster with proteins L14 and L19. Methylated by PrmB.

Its function is as follows. One of the primary rRNA binding proteins, it binds directly near the 3'-end of the 23S rRNA, where it nucleates assembly of the 50S subunit. The sequence is that of Large ribosomal subunit protein uL3 from Yersinia pseudotuberculosis serotype O:1b (strain IP 31758).